The following is a 300-amino-acid chain: Transcription initiation factor IIB (300 aa).

The TFIIB-type zinc finger occupies 2–34; it reads NKQKVCPACESAELIYDPERGEIVCAKCGYVIE. The Zn(2+) site is built by Cys-7, Cys-10, Cys-26, and Cys-29. A run of 2 repeats spans residues 114-197 and 210-291.

The protein belongs to the TFIIB family.

In terms of biological role, stabilizes TBP binding to an archaeal box-A promoter. Also responsible for recruiting RNA polymerase II to the pre-initiation complex (DNA-TBP-TFIIB). The protein is Transcription initiation factor IIB of Pyrococcus furiosus (strain ATCC 43587 / DSM 3638 / JCM 8422 / Vc1).